The sequence spans 209 residues: Large ribosomal subunit protein uL3 (209 aa).

The disordered stretch occupies residues 127–152 (SGGPSSHGSKFHRHLGSTGQAATPSR). Over residues 143 to 152 (STGQAATPSR) the composition is skewed to polar residues.

This sequence belongs to the universal ribosomal protein uL3 family. In terms of assembly, part of the 50S ribosomal subunit. Forms a cluster with proteins L14 and L19.

Functionally, one of the primary rRNA binding proteins, it binds directly near the 3'-end of the 23S rRNA, where it nucleates assembly of the 50S subunit. The sequence is that of Large ribosomal subunit protein uL3 from Borrelia hermsii (strain HS1 / DAH).